The sequence spans 20 residues: Pommaclein (20 aa).

It belongs to the GASA family. As to expression, expressed in pulp (aril) of fruits (at protein level).

The polypeptide is Pommaclein (Punica granatum (Pomegranate)).